A 73-amino-acid chain; its full sequence is Defensin-like protein 6 (73 aa).

The signal sequence occupies residues 1 to 26 (MENKFFAAFFLLLVLFSSQEIIGGEG). Intrachain disulfides connect Cys-29/Cys-73, Cys-40/Cys-60, Cys-46/Cys-67, and Cys-50/Cys-69.

This sequence belongs to the DEFL family.

Its subcellular location is the secreted. Confers broad-spectrum resistance to pathogens. The polypeptide is Defensin-like protein 6 (PDF2.5) (Arabidopsis thaliana (Mouse-ear cress)).